The primary structure comprises 326 residues: Tetraacyldisaccharide 4'-kinase (326 aa).

Ser53–Thr60 is a binding site for ATP.

This sequence belongs to the LpxK family.

The enzyme catalyses a lipid A disaccharide + ATP = a lipid IVA + ADP + H(+). The protein operates within glycolipid biosynthesis; lipid IV(A) biosynthesis; lipid IV(A) from (3R)-3-hydroxytetradecanoyl-[acyl-carrier-protein] and UDP-N-acetyl-alpha-D-glucosamine: step 6/6. Functionally, transfers the gamma-phosphate of ATP to the 4'-position of a tetraacyldisaccharide 1-phosphate intermediate (termed DS-1-P) to form tetraacyldisaccharide 1,4'-bis-phosphate (lipid IVA). The polypeptide is Tetraacyldisaccharide 4'-kinase (Actinobacillus pleuropneumoniae serotype 7 (strain AP76)).